The following is a 215-amino-acid chain: Probable cutinase 3 (215 aa).

Positions 1 to 17 (MHFRALLVSALATLAMA) are cleaved as a signal peptide. 2 disulfides stabilise this stretch: cysteine 39–cysteine 118 and cysteine 65–cysteine 79. Serine 129 functions as the Nucleophile in the catalytic mechanism. A disulfide bond links cysteine 180 and cysteine 187. Aspartate 184 is a catalytic residue. Histidine 197 serves as the catalytic Proton donor/acceptor.

It belongs to the cutinase family.

It localises to the secreted. It carries out the reaction cutin + H2O = cutin monomers.. Functionally, catalyzes the hydrolysis of complex carboxylic polyesters found in the cell wall of plants. Degrades cutin, a macromolecule that forms the structure of the plant cuticle. In Aspergillus clavatus (strain ATCC 1007 / CBS 513.65 / DSM 816 / NCTC 3887 / NRRL 1 / QM 1276 / 107), this protein is Probable cutinase 3.